Consider the following 4981-residue polypeptide: MDLAPDRATGRPWLPLHTLSVSQLLRVFWLLSLLPGQAWVHGAEPRQVFQVLEEQPPGTLVGTIQTRPGFTYRLSESHALFAINSSTGALYTTSTIDRESLPSDVINLVVLSSAPTYPTEVRVLVRDLNDNAPVFPDPSIVVTFKEDSSSGRQVILDTATDSDIGSNGVDHRSYRIIRGNEAGRFRLDITLNPSGEGAFLHLVSKGGLDREVTPQYQLLVEVEDKGEPKRRGYLQVNVTVQDINDNPPVFGSSHYQAGVPEDAVVGSSVLQVAAADADEGTNADIRYRLQDEGTPFQMDPETGLITVREPLDFEARRQYSLTVQAMDRGVPSLTGRAEALIQLLDVNDNDPVVKFRYFPATSRYASVDENAQVGTVVALLTVTDADSPAANGNISVQILGGNEQRHFEVQSSKVPNLSLIKVASALDRERIPSYNLTVSVSDNYGAPPGAAVQARSSVASLVIFVNDINDHPPVFSQQVYRVNLSEEAPPGSYVSGISATDGDSGLNANLRYSIVSGNGLGWFHISEHSGLVTTGSSGGLDRELASQIVLNISARDQGVHPKVSYAQLVVTLLDVNDEKPVFSQPEGYDVSVVENAPTGTELLMLRATDGDLGDNGTVRFSLQEAETDRRSFRLDPVSGRLSTISSLDREEQAFYSLLVLATDLGSPPQSSMARINVSLLDINDNSPVFYPVQYFAHIKENEPGGSYITTVSATDPDLGTNGTVKYSISAGDRSRFQVNAQSGVISTRMALDREEKTAYQLQIVATDGGNLQSPNQAIVTITVLDTQDNPPVFSQVAYSFVVFENVALGYHVGSVSASTMDLNSNISYLITTGDQKGMFAINQVTGQLTTANVIDREEQSFYQLKVVASGGTVTGDTMVNITVKDLNDNSPHFLQAIESVNVVENWQAGHSIFQAKAVDPDEGVNGMVLYSLKQNPKNLFAINEKNGTISLLGPLDVHAGSYQIEILASDMGVPQLSSSVILTVYVHDVNDNSPVFDQLSYEVTLSESEPVNSRFFKVQASDKDSGANGEIAYTIAEGNTGDAFGIFPDGQLYIKSELDRELQDRYVLMVVASDRAVEPLSATVNVTVILEDVNDNRPLFNSTNYTFYFEEEQRAGSFVGKVSAVDKDFGPNGEVRYSFEMVQPDFELHAISGEITNTHQFDRESLMRRRGTAVFSFTVIATDQGIPQPLKDQATVHVYMKDINDNAPKFLKDFYQATISESAANLTQVLRVSASDVDEGNNGLIHYSIIKGNEERQFAIDSTSGQVTLIGKLDYEATPAYSLVIQAVDSGTIPLNSTCTLNIDILDENDNTPSFPKSTLFVDVLENMRIGELVSSVTATDSDSGDNADLYYSITGTNNHGTFSISPNTGSIFLAKKLDFETQSLYKLNITAKDQGRPPRSSTMSVVIHVRDFNDNPPSFPPGDIFKSIVENIPIGTSVISVTAHDPDADINGQLSYTIIQQMPRGNHFTIDEVKGTIYTNAEIDREFANLFELTVKANDQAVPIETRRYALKNVTILVTDLNDNVPMFISQNALAADPSAVIGSVLTTIMAADPDEGANGEIEYEIINGDTDTFIVDRYSGDLRVASALVPSQLIYNLIVSATDLGPERRKSTTELTIILQGLDGPVFTQPKYITILKEGEPIGTNVISIEAASPRGSEAPVEYYIVSVRCEEKTVGRLFTIGRHTGIIQTAAILDREQGACLYLVDVYAIEKSTAFPRTQRAEVEITLQDINDNPPVFPTDMLDLTVEENIGDGSKIMQLTAMDADEGANALVTYTIISGADDSFRIDPESGDLIATRRLDRERRSKYSLLVRADDGLQSSDMRINITVSDVNDHTPKFSRPVYSFDIPEDTIPGSLVAAILATDDDSGVNGEITYIVNEDDEDGIFFLNPITGVFNLTRLLDYEVQQYYILTVRAEDGGGQFTTIRVYFNILDVNDNPPIFSLNSYSTSLMENLPVGSTVLVFNVTDADDGINSQLTYSIASGDSLGQFTVDKNGVLKVLKALDRESQSFYNLVVQVHDLPQIPASRFTSTAQVSIILLDVNDNPPTFLSPKLTYIPENTPIDTVVFKAQATDPDSGPNSYIEYTLLNPLGNKFSIGTIDGEVRLTGELDREEVSNYTLTVVATDKGQPSLSSSTEVVVMVLDINDNNPIFAQALYKVEINENTLTGTDIIQVFAADGDEGTNGQVRYGIVNGNTNQEFRIDSVTGAITVAKPLDREKTPTYHLTVQATDRGSTPRTDTSTVSIVLLDINDFVPVFELSPYSVNVPENLGTLPRTILQVVARDDDRGSNSKLSYVLFGGNEDNAFTLSASGELGVTQSLDRETKERFVLMITATDSGSPALTGTGTINVIVDDVNDNVPTFASKAYFTTIPEDAPTGTDVLLVNASDADASKNAVIRIIGGNSQFTINPSTGQIITSALLDRETKDNYTLVVVCSDAGSPEPLSSSTSVLVTVTDVNDNPPRFQHHPYVTHIPSPTLPGSFVFAVTVTDADIGPNSELHYSLSGRNSEKFHIDPLRGAIMAAGPLNGASEVTFSVHVKDGGSFPKTDSTTVTVRFVNKADFPKVRAKEQTFMFPENQPVSSLVTTITGSSLRGEPMSYYIASGNLGNTFQIDQLTGQVSISQPLDFEKIQKYVVWIEARDGGFPPFSSYEKLDITVLDVNDNAPIFKEDPFISEILENLSPRKILTVSAMDKDSGPNGQLDYEIVNGNMENSFSINHATGEIRSVRPLDREKVSHYVLTIKSSDKGSPSQSTSVKVMINILDENDNAPRFSQIFSAHVPENSPLGYTVTRVTTSDEDIGINAISRYSIMDASLPFTINPSTGDIVISRPLNREDTDRYRIRVSAHDSGWTVSTDVTIFVTDINDNAPRFSRTSYYLDCPELTEIGSKVTQVFATDPDEGSNGQVFYFIKSQSEYFRINATTGEIFNKQILKYQNVTGFSNVNINRHSFIVTSSDRGKPSLISETTVTINIVDSNDNAPQFLKSKYFTPVTKNVKVGTKLIRVTAIDDKDFGLNSEVEYFISNDNHLGKFKLDNDTGWISVASSLISDLNQNFFITVTAKDKGNPPLSSQATVHITVTEENYHTPEFSQSHMSATIPESHSIGSIVRTVSARDRDAAMNGLIKYSISSGNEEGIFAINSSTGILTLAKALDYELCQKHEMTISAIDGGWVARTGYCSVTVNVIDVNDNSPVFLSDDYFPTVLENAPSGTTVIHLNATDADSGTNAVIAYTVQSSDSDLFVIDPNTGVITTQGFLDFETKQSYHLTVKAFNVPDEERCSFATVNIQLKGTNEYVPRFVSKLYYFEISEAAPKGTIVGEVFASDRDLGTDGEVHYLIFGNSRKKGFQINKKTGQIYVSGILDREKEERVSLKVLAKNFGSIRGADIDEVTVNVTVLDANDPPIFTLNIYSVQISEGVPIGTHVTFVSAFDSDSIPSWSRFSYFIGSGNENGAFSINPQTGQITVTAELDRETLPIYNLSVLAVDSGTPSATGSASLLVTLEDINDNGPMLTVSEGEVMENKRPGTLVMTLQSTDPDLPPNQGPFTYYLLSTGPATSYFSLSTAGVLSTTREIDREQIADFYLSVVTKDSGVPQMSSTGTVHITVIDQNDNPSQSRTVEIFVNYYGNLFPGGILGSVKPQDPDVLDSFHCSLTSGVTSLFSIPGGTCDLNSQPRSTDGTFDLTVLSNDGVHSTVTSNIRVFFAGFSNATVDNSILLRLGVPTVKDFLTNHYLHFLRIASSQLTGLGTAVQLYSAYEENNRTFLLAAVKRNHNQYVNPSGVATFFESIKEILLRQSGVKVESVDHDSCVHGPCQNGGSCLRRLAVSSVLKSRESLPVIIVANEPLQPFLCKCLPGYAGSWCEIDIDECLPSPCHSGGTCHNLVGGFSCSCPDGFTGRACERDINECLQSPCKNGAICQNFPGSFNCVCKTGYTGKMCESSVNYCECNPCFNGGSCQSGVDSYYCHCPFGVFGKHCELNSYGFEELSYMEFPSLDPNNNYIYVKFATIKSHALLLYNYDNQTGDRAEFLALEIAEERLRFSYNLGSGTYKLTTMKKVSDGHFHTVIARRAGMAASLTVDSCSENQEPGYCTVSNVAVSDDWTLDVQPNRVTVGGIRSLEPILQRRGHVESHDFVGCIMEFAVNGRPLEPSQALAAQGILDQCPRLEGACTRSPCQHGGTCMDYWSWQQCHCKEGLTGKYCEKSVTPDTALSLEGKGRLDYHMSQNEKREYLLRQSLRGAMLEPFGVNSLEVKFRTRSENGVLIHIQESSNYTTVKIKNGKVYFTSDAGIAGKVERNIPEVYVADGHWHTFLIGKNGTATVLSVDRIYNRDIIHPTQDFGGLDVLTISLGGIPPNQAHRDAQTAGFDGCIASMWYGGESLPFSGKHSLASISKTDPSVKIGCRGPNICASNPCWGDLLCINQWYAYRCVPPGDCASHPCQNGGSCEPGLHSGFTCSCPDSHTGRTCEMVVACLGVLCPQGKVCKAGSPAGHVCVLSQGPEEISLPLWAVPAIVGSCATVLALLVLSLILCNQCRGKKAKNPKEEKKPKEKKKKGSENVAFDDPDNIPPYGDDMTVRKQPEGNPKPDIIERENPYLIYDETDIPHNSETIPSAPLASPEQEIEHYDIDNASSIAPSDADIIQHYKQFRSHTPKFSIQRHSPLGFARQSPMPLGASSLTYQPSYGQGLRTSSLSHSACPTPNPLSRHSPAPFSKSSTFYRNSPARELHLPIRDGNTLEMHGDTCQPGIFNYATRLGRRSKSPQAMASHGSRPGSRLKQPIGQIPLESSPPVGLSIEEVERLNTPRPRNPSICSADHGRSSSEEDCRRPLSRTRNPADGIPAPESSSDSDSHESFTCSEMEYDREKPMVYTSRMPKLSQVNESDADDEDNYGARLKPRRYHGRRAEGGPVGTQAAAPGTADNTLPMKLGQQAGTFNWDNLLNWGPGFGHYVDVFKDLASLPEKAAANEEGKAGTTKPVPKDGEAEQYV.

Positions 1 to 38 (MDLAPDRATGRPWLPLHTLSVSQLLRVFWLLSLLPGQA) are cleaved as a signal peptide. Residues 39-4504 (WVHGAEPRQV…PEEISLPLWA (4466 aa)) lie on the Extracellular side of the membrane. Cadherin domains follow at residues 43-135 (AEPR…APVF), 136-250 (PDPS…PPVF), 251-353 (GSSH…DPVV), 359-475 (PATS…PPVF), 476-582 (SQQV…KPVF), 584-689 (QPEG…SPVF), 690-793 (YPVQ…PPVF), 794-893 (SQVA…SPHF), 894-996 (LQAI…SPVF), 997-1100 (DQLS…RPLF), 1101-1210 (NSTN…APKF), 1211-1315 (LKDF…TPSF), 1316-1420 (PKST…PPSF), 1421-1529 (PPGD…VPMF), 1529-1629 (FISQ…GPVF), 1630-1740 (TQPK…PPVF), 1741-1841 (PTDM…TPKF), 1842-1944 (SRPV…PPIF), 1945-2051 (SLNS…PPTF), 2051-2154 (FLSP…NPIF), 2155-2259 (AQAL…VPVF), 2260-2364 (ELSP…VPTF), 2365-2466 (ASKA…PPRF), 2467-2567 (QHHP…FPKV), 2568-2669 (RAKE…APIF), 2670-2773 (KEDP…APRF), 2773-2872 (FSQI…APRF), 2873-2983 (SRTS…APQF), 2984-3089 (LKSK…TPEF), 3090-3194 (SQSH…SPVF), 3195-3298 (LSDD…VPRF), 3299-3404 (VSKL…PPIF), 3405-3510 (TLNI…GPML), and 3509-3620 (MLTV…VEIF). Residues Asn-84 and Asn-237 are each glycosylated (N-linked (GlcNAc...) asparagine). Residues Asn-393, Asn-416, Asn-435, Asn-483, Asn-551, Asn-615, Asn-676, Asn-721, Asn-825, Asn-880, Asn-946, Asn-1085, Asn-1101, Asn-1104, Asn-1225, Asn-1296, Asn-1389, and Asn-1514 are each glycosylated (N-linked (GlcNAc...) asparagine). Residues Asn-1828, Asn-1899, Asn-1967, and Asn-2119 are each glycosylated (N-linked (GlcNAc...) asparagine). Asn-2387 and Asn-2430 each carry an N-linked (GlcNAc...) asparagine glycan. Residues Asn-2921, Asn-2937, Asn-3036, Asn-3140, Asn-3217, Asn-3392, and Asn-3477 are each glycosylated (N-linked (GlcNAc...) asparagine). N-linked (GlcNAc...) asparagine glycans are attached at residues Asn-3706 and Asn-3758. Residues 3802–3860 (DHDSCVHGPCQNGGSCLRRLAVSSVLKSRESLPVIIVANEPLQPFLCKCLPGYAGSWCE) form the EGF-like 1 domain. Intrachain disulfides connect Cys-3806–Cys-3817, Cys-3811–Cys-3848, Cys-3850–Cys-3859, Cys-3866–Cys-3877, Cys-3871–Cys-3886, Cys-3888–Cys-3897, Cys-3904–Cys-3915, Cys-3909–Cys-3924, Cys-3926–Cys-3935, Cys-3942–Cys-3953, Cys-3947–Cys-3962, and Cys-3964–Cys-3973. The EGF-like 2; calcium-binding domain maps to 3862-3898 (DIDECLPSPCHSGGTCHNLVGGFSCSCPDGFTGRACE). In terms of domain architecture, EGF-like 3; calcium-binding spans 3900–3936 (DINECLQSPCKNGAICQNFPGSFNCVCKTGYTGKMCE). The 37-residue stretch at 3938–3974 (SVNYCECNPCFNGGSCQSGVDSYYCHCPFGVFGKHCE) folds into the EGF-like 4 domain. One can recognise a Laminin G-like 1 domain in the interval 3975-4159 (LNSYGFEELS…LAAQGILDQC (185 aa)). N-linked (GlcNAc...) asparagine glycosylation occurs at Asn-4017. 4 cysteine pairs are disulfide-bonded: Cys-4133–Cys-4159, Cys-4166–Cys-4177, Cys-4171–Cys-4186, and Cys-4188–Cys-4197. The EGF-like 5 domain occupies 4162–4198 (LEGACTRSPCQHGGTCMDYWSWQQCHCKEGLTGKYCE). A Laminin G-like 2 domain is found at 4217 to 4398 (YHMSQNEKRE…KTDPSVKIGC (182 aa)). Asn-4267 and Asn-4312 each carry an N-linked (GlcNAc...) asparagine glycan. Disulfide bonds link Cys-4365–Cys-4398, Cys-4430–Cys-4441, Cys-4435–Cys-4451, and Cys-4453–Cys-4462. In terms of domain architecture, EGF-like 6 spans 4426–4463 (PPGDCASHPCQNGGSCEPGLHSGFTCSCPDSHTGRTCE). Residues 4505 to 4525 (VPAIVGSCATVLALLVLSLIL) form a helical membrane-spanning segment. At 4526–4981 (CNQCRGKKAK…PKDGEAEQYV (456 aa)) the chain is on the cytoplasmic side. Disordered stretches follow at residues 4534–4584 (AKNP…PDII), 4680–4713 (QGLR…STFY), 4752–4856 (RSKS…MEYD), 4869–4911 (KLSQ…AAPG), and 4957–4981 (AAAN…EQYV). The segment covering 4680–4699 (QGLRTSSLSHSACPTPNPLS) has biased composition (polar residues). The tract at residues 4706 to 4795 (FSKSSTFYRN…GLSIEEVERL (90 aa)) is necessary and sufficient for interaction with MPDZ. Positions 4809 to 4821 (DHGRSSSEEDCRR) are enriched in basic and acidic residues. Residue Ser-4876 is modified to Phosphoserine. Residues 4971–4981 (VPKDGEAEQYV) are compositionally biased toward basic and acidic residues.

As to quaternary structure, heterophilic interaction with DCHS1; this interaction affects their respective protein levels. Interacts (via cytoplasmic domain) with MPDZ. Forms a complex with PALS1 and MPDZ. Widely expressed. Expressed in fetal brain, infant brain, brain tumor and colorectal cancer.

The protein localises to the membrane. Its function is as follows. Cadherins are calcium-dependent cell adhesion proteins. FAT4 plays a role in the maintenance of planar cell polarity as well as in inhibition of YAP1-mediated neuroprogenitor cell proliferation and differentiation. In Homo sapiens (Human), this protein is Protocadherin Fat 4 (FAT4).